A 680-amino-acid polypeptide reads, in one-letter code: Tumor protein 63 (680 aa).

The interval 1 to 107 is transcription activation; the sequence is MNFETSRCAT…MQDSDLSDPM (107 aa). A compositionally biased stretch (polar residues) spans 123-157; it reads QIQNGSSSTSPYNTDHAQNSVTAPSPYAQPSSTFD. The segment at 123–171 is disordered; that stretch reads QIQNGSSSTSPYNTDHAQNSVTAPSPYAQPSSTFDALSPSPAIPSNTDY. A DNA-binding region spans residues 170 to 362; it reads DYPGPHSFDV…KADEDSIRKQ (193 aa). Zn(2+) contacts are provided by Cys244, His247, Cys308, and Cys312. The segment covering 351–360 has biased composition (basic and acidic residues); the sequence is DRKADEDSIR. Disordered stretches follow at residues 351-393 and 436-472; these read DRKA…IKKR and RQQQ…MNSM. The segment at 352–388 is interaction with HIPK2; it reads RKADEDSIRKQQVSDSAKNGDGTKRPFRQNTHGIQMT. Residues 379–389 show a composition bias toward polar residues; sequence RQNTHGIQMTS. Residues 394-443 form an oligomerization region; it reads RSPDDELLYLPVRGRETYEMLLKIKESLELMQYLPQHTIETYRQQQQQQH. Residues 437–463 show a composition bias toward low complexity; it reads QQQQQQHQHLLQKQTSMQSQSSYGNSS. One can recognise an SAM domain in the interval 541 to 607; sequence PPYPTDCSIV…WKGILDHRQL (67 aa). Positions 610 to 680 are transactivation inhibition; that stretch reads FSSPPHLLRT…KQQRIKEEGE (71 aa). Lys676 participates in a covalent cross-link: Glycyl lysine isopeptide (Lys-Gly) (interchain with G-Cter in SUMO).

Belongs to the p53 family. In terms of assembly, binds DNA as a homotetramer. Isoform composition of the tetramer may determine transactivation activity. Interacts with HIPK2. Interacts with SSRP1, leading to stimulate coactivator activity. Interacts with PDS5A. Interacts (via activation domain) with NOC2L. Interacts with WWP1. Zn(2+) is required as a cofactor. May be sumoylated. In terms of processing, ubiquitinated. Polyubiquitination involves WWP1 and leads to proteasomal degradation of this protein. In terms of tissue distribution, widely expressed, notably in thymus, prostate, placenta and skeletal muscle, although the precise isoform varies according to tissue type. Progenitor cell layers of skin, breast and prostate express high levels of DeltaN-type isoforms.

It is found in the nucleus. In terms of biological role, acts as a sequence specific DNA binding transcriptional activator or repressor. The isoforms contain a varying set of transactivation and auto-regulating transactivation inhibiting domains thus showing an isoform specific activity. May be required in conjunction with TP73/p73 for initiation of p53/TP53 dependent apoptosis in response to genotoxic insults and the presence of activated oncogenes. Involved in Notch signaling by probably inducing JAG1 and JAG2. Activates transcription of the p21 promoter. Activates RIPK4 transcription. Plays a role in the regulation of epithelial morphogenesis. The ratio of DeltaN-type and TA*-type isoforms may govern the maintenance of epithelial stem cell compartments and regulate the initiation of epithelial stratification from the undifferentiated embryonal ectoderm. Required for limb formation from the apical ectodermal ridge. The protein is Tumor protein 63 (Tp63) of Mus musculus (Mouse).